Consider the following 507-residue polypeptide: MLNADLKQQLKQLLELMEGNVEFVASLGSDEKSKELKELLTEISDMSPRLSLSEKSLKRTPSFSVNRPGEETGVTFAGIPLGHEFNSLVLAILQVSGRAPKEKQSIIDQIKNLEGSFHFETFISLTCQKCPDVVQALNLMSVINPNITHSMIDGAVFREESENIMAVPAVFLNGEEFGNGRMTIQDILSKLGSTADASEFENKEPYDVLIVGGGPASGSAAIYTARKGLRTGIVADRIGGQVNDTAGIENFITVKETTGSEFSSNLAAHIDQYDIDAMTGIRATDIEKTDEAIKVTLENGAVLESKTVIIATGAGWRKLNIPGEEQLINKGVAFCPHCDGPLFENKDVAVIGGGNSGVEAAIDLAGIVNHVTLFEFASELKADNVLQDRLRSLSNVDIKTNAKTTEVVGEDHVTGIRYEDMSTGEEHLLNLDGIFVQIGLLPNTSWLKDAVELNERGEIVIDRNNNTNVPGIFAAGDVTDQKNKQIIISMGAGANAALNAFDYIIRN.

Asp-207–Ile-222 lines the FAD pocket. Cys-335 and Cys-338 are oxidised to a cystine. Asp-347 to Ala-361 contributes to the NAD(+) binding site. Thr-467 to Asp-477 provides a ligand contact to FAD.

It belongs to the class-II pyridine nucleotide-disulfide oxidoreductase family. As to quaternary structure, homodimer. The cofactor is FAD.

Functionally, serves to protect the cell against DNA damage by alkyl hydroperoxides. It can use either NADH or NADPH as electron donor for direct reduction of redox dyes or of alkyl hydroperoxides when combined with the AhpC protein. In Staphylococcus aureus (strain Mu50 / ATCC 700699), this protein is Alkyl hydroperoxide reductase subunit F (ahpF).